A 72-amino-acid polypeptide reads, in one-letter code: Translation initiation factor IF-1 (72 aa).

An S1-like domain is found at 1 to 72; the sequence is MAKDDVIEVE…TRGRIVWRGK (72 aa).

It belongs to the IF-1 family. As to quaternary structure, component of the 30S ribosomal translation pre-initiation complex which assembles on the 30S ribosome in the order IF-2 and IF-3, IF-1 and N-formylmethionyl-tRNA(fMet); mRNA recruitment can occur at any time during PIC assembly.

It is found in the cytoplasm. One of the essential components for the initiation of protein synthesis. Stabilizes the binding of IF-2 and IF-3 on the 30S subunit to which N-formylmethionyl-tRNA(fMet) subsequently binds. Helps modulate mRNA selection, yielding the 30S pre-initiation complex (PIC). Upon addition of the 50S ribosomal subunit IF-1, IF-2 and IF-3 are released leaving the mature 70S translation initiation complex. The protein is Translation initiation factor IF-1 of Caldanaerobacter subterraneus subsp. tengcongensis (strain DSM 15242 / JCM 11007 / NBRC 100824 / MB4) (Thermoanaerobacter tengcongensis).